We begin with the raw amino-acid sequence, 172 residues long: Myosin regulatory light chain 12B (172 aa).

Residues 1-16 (MSSKKAKTKTTKKRPQ) are compositionally biased toward basic residues. Positions 1–20 (MSSKKAKTKTTKKRPQRATS) are disordered. Phosphothreonine; by MLCK and ZIPK/DAPK3 is present on Thr19. Ser20 is modified (phosphoserine; by MLCK and ZIPK/DAPK3). EF-hand domains lie at 29-64 (SQIQ…LGKN), 98-133 (DPED…MGDR), and 134-169 (FTDE…GAKD). Asp42, Asn44, Asp46, and Asp53 together coordinate Ca(2+).

As to quaternary structure, myosin is a hexamer of 2 heavy chains and 4 light chains: interacts with myosin heavy chain MYO19. In terms of processing, phosphorylation increases the actin-activated myosin ATPase activity and thereby regulates the contractile activity. It is required to generate the driving force in the migration of the cells but not necessary for localization of myosin-2 at the leading edge. Phosphorylation is reduced following epigallocatechin-3-O-gallate treatment.

Functionally, myosin regulatory subunit that plays an important role in regulation of both smooth muscle and nonmuscle cell contractile activity via its phosphorylation. Phosphorylation triggers actin polymerization in vascular smooth muscle. Implicated in cytokinesis, receptor capping, and cell locomotion. This Rattus norvegicus (Rat) protein is Myosin regulatory light chain 12B (Myl12b).